A 975-amino-acid chain; its full sequence is Leucine-zipper-like transcriptional regulator 1 homolog (975 aa).

Over residues 16–32 the composition is skewed to gly residues; it reads RGGGGGGCGGGGAGGSA. Disordered regions lie at residues 16 to 41 and 158 to 186; these read RGGG…TSGS and MSSS…SCSS. A compositionally biased stretch (low complexity) spans 174–186; it reads ASSSHPPGSSCSS. 6 Kelch repeats span residues 263–312, 314–369, 370–417, 421–467, 478–524, and 530–581; these read AMFV…VAGS, MFIF…VYDN, KMWI…PVAV, AMYV…PSRR, FLYV…FHAS, and AMYI…FIVG. BTB domains lie at 574–670 and 801–870; these read CDIQ…DLKD and CDIS…KMPP.

This sequence belongs to the LZTR1 family. Component of some BCR (BTB-CUL3-RBX1) E3 ubiquitin-protein ligase complex. In terms of tissue distribution, expressed in Rdl-expressing neurons of the mushroom body, the neurons projecting to the LC9 optic glomerulus and in a neuronal cluster near the subesophageal ganglion (at protein level).

Its pathway is protein modification; protein ubiquitination. Functionally, inhibitor of Ras signaling. Acts as a substrate-specific adapter of a BCR (BTB-CUL3-RBX1) E3 ubiquitin-protein ligase complex that mediates ubiquitination of Ras. Together with Nf1, plays an important role for normal sleep behavior, mainly during the night. Might affect sleep by modulating GABA signaling in Rdl-expressing neurons. Might play a role in the regulation of brain glycogen metabolism and organismal levels of triglycerides. This chain is Leucine-zipper-like transcriptional regulator 1 homolog, found in Drosophila melanogaster (Fruit fly).